The chain runs to 246 residues: MSTHNDSAPTSRRRHIVRLVVFAGFLVGMFYLVAATDVIDVAAVRGAVSATGPAAPLTYVVVSAVLGALFVPGPILAASSGLLFGPLVGVFVTLGATVGTAVVASLVGRRAGRASARALLGGERADRTDALIERCGLWAVVGQRFVPGISDAFASYAFGTFGVPLWQMAVGAFIGSAPRAFAYTALGAAIGDRSPLLASCAIAVWCVTAIIGAFAARHGYRQWRAHARGDGADGGVEDPDREVGAR.

5 helical membrane-spanning segments follow: residues 19 to 39 (LVVF…TDVI), 57 to 77 (LTYV…PILA), 83 to 103 (LFGP…TAVV), 157 to 177 (AFGT…IGSA), and 196 to 216 (LLAS…AFAA).

Belongs to the TVP38/TMEM64 family.

It is found in the cell membrane. In Mycobacterium tuberculosis (strain CDC 1551 / Oshkosh), this protein is TVP38/TMEM64 family membrane protein MT0653.